Consider the following 324-residue polypeptide: Glutathione synthetase (324 aa).

One can recognise an ATP-grasp domain in the interval 129-313 (KLYALHFPDL…LEDEIVDWLV (185 aa)). Residue 155–211 (VDIHGRAVIKPLDGKGGEGIFLLARADRNLNAIIEASTAYGTRHVMVQRYLEESRQG) coordinates ATP. The Mg(2+) site is built by glutamate 284 and asparagine 286.

It belongs to the prokaryotic GSH synthase family. Mg(2+) serves as cofactor. Mn(2+) is required as a cofactor.

The catalysed reaction is gamma-L-glutamyl-L-cysteine + glycine + ATP = glutathione + ADP + phosphate + H(+). It participates in sulfur metabolism; glutathione biosynthesis; glutathione from L-cysteine and L-glutamate: step 2/2. This Gloeobacter violaceus (strain ATCC 29082 / PCC 7421) protein is Glutathione synthetase.